The following is a 491-amino-acid chain: Endoglucanase 14 (491 aa).

The first 31 residues, 1–31 (MSQLKIGSSQCLWTSICIVLFVLSMARGAVS), serve as a signal peptide directing secretion. Catalysis depends on Asp86, which acts as the Nucleophile. Asn397 carries an N-linked (GlcNAc...) asparagine glycan. Residues His413, Asp465, and Glu474 contribute to the active site.

Belongs to the glycosyl hydrolase 9 (cellulase E) family.

Its subcellular location is the secreted. It catalyses the reaction Endohydrolysis of (1-&gt;4)-beta-D-glucosidic linkages in cellulose, lichenin and cereal beta-D-glucans.. The chain is Endoglucanase 14 from Arabidopsis thaliana (Mouse-ear cress).